Reading from the N-terminus, the 230-residue chain is Ethylene-responsive transcription factor ERF012 (230 aa).

Residues 1–17 (MVKQERKIQTSSTKKEM) are compositionally biased toward basic and acidic residues. A disordered region spans residues 1-51 (MVKQERKIQTSSTKKEMPLSSSPSSSSSSSSSSSSSSCKNKNKKSKIKKYK). Positions 20-39 (SSSPSSSSSSSSSSSSSSCK) are enriched in low complexity. Residues 40–51 (NKNKKSKIKKYK) are compositionally biased toward basic residues. The AP2/ERF DNA-binding region spans 49-106 (KYKGVRMRSWGSWVSEIRAPNQKTRIWLGSYSTAEAAARAYDVALLCLKGPQANLNFP).

The protein belongs to the AP2/ERF transcription factor family. ERF subfamily. Expressed cotyledons, ovules and seeds of immature siliques.

The protein localises to the nucleus. Functionally, transcriptional activator involved in the regulation of plant development and tolerance to abiotic stresses. Involved in salt and osmotic stress response pathways. May be regulated by the stress-related genes RD29A, RD22, DREB1A or P5CS during stress response. Binds to the GCC-box pathogenesis-related promoter element. May be involved in the regulation of gene expression by stress factors and by components of stress signal transduction pathways. This is Ethylene-responsive transcription factor ERF012 (ERF012) from Arabidopsis thaliana (Mouse-ear cress).